The sequence spans 94 residues: Acylphosphatase (94 aa).

An Acylphosphatase-like domain is found at 7–94 (AVRVRISGRV…NMPRDFRITG (88 aa)). Active-site residues include Arg-22 and Asn-40.

It belongs to the acylphosphatase family.

It carries out the reaction an acyl phosphate + H2O = a carboxylate + phosphate + H(+). This Rhizobium etli (strain ATCC 51251 / DSM 11541 / JCM 21823 / NBRC 15573 / CFN 42) protein is Acylphosphatase (acyP).